The sequence spans 264 residues: Phosphatidylglycerol--prolipoprotein diacylglyceryl transferase (264 aa).

3 consecutive transmembrane segments (helical) span residues 17–37, 59–79, and 95–115; these read LAIH…LWLA, LLFY…VLFY, and WKGG…MALF. An a 1,2-diacyl-sn-glycero-3-phospho-(1'-sn-glycerol)-binding site is contributed by R142. Transmembrane regions (helical) follow at residues 205-225 and 241-261; these read GQVS…AEYF and MGQW…VWAG.

Belongs to the Lgt family.

The protein localises to the cell inner membrane. The catalysed reaction is L-cysteinyl-[prolipoprotein] + a 1,2-diacyl-sn-glycero-3-phospho-(1'-sn-glycerol) = an S-1,2-diacyl-sn-glyceryl-L-cysteinyl-[prolipoprotein] + sn-glycerol 1-phosphate + H(+). It functions in the pathway protein modification; lipoprotein biosynthesis (diacylglyceryl transfer). Catalyzes the transfer of the diacylglyceryl group from phosphatidylglycerol to the sulfhydryl group of the N-terminal cysteine of a prolipoprotein, the first step in the formation of mature lipoproteins. This Methylibium petroleiphilum (strain ATCC BAA-1232 / LMG 22953 / PM1) protein is Phosphatidylglycerol--prolipoprotein diacylglyceryl transferase.